Consider the following 276-residue polypeptide: NAD-capped RNA hydrolase NudC (276 aa).

R82 is a binding site for substrate. Residues C112 and C115 each coordinate Zn(2+). Residue E125 participates in substrate binding. The Zn(2+) site is built by C130 and C133. Y138 serves as a coordination point for substrate. A Nudix hydrolase domain is found at 139 to 262 (PRISPSMIVL…SIARYLIDLY (124 aa)). A divalent metal cation contacts are provided by A172, E188, and E192. The short motif at 173-194 (GFAEPGESAEECLVREVREEVA) is the Nudix box element. 206–213 (QCWPFPHS) provides a ligand contact to substrate. An a divalent metal cation-binding site is contributed by E233. Residue A255 coordinates substrate.

Belongs to the Nudix hydrolase family. NudC subfamily. As to quaternary structure, homodimer. It depends on Mg(2+) as a cofactor. The cofactor is Mn(2+). Zn(2+) serves as cofactor.

It carries out the reaction a 5'-end NAD(+)-phospho-ribonucleoside in mRNA + H2O = a 5'-end phospho-adenosine-phospho-ribonucleoside in mRNA + beta-nicotinamide D-ribonucleotide + 2 H(+). It catalyses the reaction NAD(+) + H2O = beta-nicotinamide D-ribonucleotide + AMP + 2 H(+). The catalysed reaction is NADH + H2O = reduced beta-nicotinamide D-ribonucleotide + AMP + 2 H(+). In terms of biological role, mRNA decapping enzyme that specifically removes the nicotinamide adenine dinucleotide (NAD) cap from a subset of mRNAs by hydrolyzing the diphosphate linkage to produce nicotinamide mononucleotide (NMN) and 5' monophosphate mRNA. The NAD-cap is present at the 5'-end of some mRNAs and stabilizes RNA against 5'-processing. Has preference for mRNAs with a 5'-end purine. Catalyzes the hydrolysis of a broad range of dinucleotide pyrophosphates. The polypeptide is NAD-capped RNA hydrolase NudC (Pseudomonas entomophila (strain L48)).